A 336-amino-acid chain; its full sequence is Ketol-acid reductoisomerase (NADP(+)) 1 (336 aa).

A KARI N-terminal Rossmann domain is found at 2–181 (AKVYYEKDVT…GATRAGVLET (180 aa)). NADP(+)-binding positions include 25 to 28 (YGSQ), arginine 48, serine 52, and 82 to 85 (DELQ). Histidine 107 is an active-site residue. Glycine 133 is a binding site for NADP(+). Positions 182-327 (TFKEETETDL…RKLREMMPFV (146 aa)) constitute a KARI C-terminal knotted domain. Aspartate 190, glutamate 194, glutamate 226, and glutamate 230 together coordinate Mg(2+). Serine 251 serves as a coordination point for substrate.

It belongs to the ketol-acid reductoisomerase family. The cofactor is Mg(2+).

The catalysed reaction is (2R)-2,3-dihydroxy-3-methylbutanoate + NADP(+) = (2S)-2-acetolactate + NADPH + H(+). The enzyme catalyses (2R,3R)-2,3-dihydroxy-3-methylpentanoate + NADP(+) = (S)-2-ethyl-2-hydroxy-3-oxobutanoate + NADPH + H(+). Its pathway is amino-acid biosynthesis; L-isoleucine biosynthesis; L-isoleucine from 2-oxobutanoate: step 2/4. It participates in amino-acid biosynthesis; L-valine biosynthesis; L-valine from pyruvate: step 2/4. Involved in the biosynthesis of branched-chain amino acids (BCAA). Catalyzes an alkyl-migration followed by a ketol-acid reduction of (S)-2-acetolactate (S2AL) to yield (R)-2,3-dihydroxy-isovalerate. In the isomerase reaction, S2AL is rearranged via a Mg-dependent methyl migration to produce 3-hydroxy-3-methyl-2-ketobutyrate (HMKB). In the reductase reaction, this 2-ketoacid undergoes a metal-dependent reduction by NADPH to yield (R)-2,3-dihydroxy-isovalerate. This chain is Ketol-acid reductoisomerase (NADP(+)) 1, found in Bacillus cereus (strain ATCC 10987 / NRS 248).